Here is a 568-residue protein sequence, read N- to C-terminus: Proline--tRNA ligase (568 aa).

The protein belongs to the class-II aminoacyl-tRNA synthetase family. ProS type 1 subfamily. Homodimer.

It localises to the cytoplasm. The enzyme catalyses tRNA(Pro) + L-proline + ATP = L-prolyl-tRNA(Pro) + AMP + diphosphate. Functionally, catalyzes the attachment of proline to tRNA(Pro) in a two-step reaction: proline is first activated by ATP to form Pro-AMP and then transferred to the acceptor end of tRNA(Pro). As ProRS can inadvertently accommodate and process non-cognate amino acids such as alanine and cysteine, to avoid such errors it has two additional distinct editing activities against alanine. One activity is designated as 'pretransfer' editing and involves the tRNA(Pro)-independent hydrolysis of activated Ala-AMP. The other activity is designated 'posttransfer' editing and involves deacylation of mischarged Ala-tRNA(Pro). The misacylated Cys-tRNA(Pro) is not edited by ProRS. The sequence is that of Proline--tRNA ligase from Listeria monocytogenes serotype 4b (strain F2365).